Reading from the N-terminus, the 453-residue chain is uncharacterized protein (453 aa).

The protein to S.faecalis plasmid PAM373 EP0012.

This is an uncharacterized protein from Listeria innocua serovar 6a (strain ATCC BAA-680 / CLIP 11262).